Reading from the N-terminus, the 376-residue chain is Mitogen-activated protein kinase 4 (376 aa).

In terms of domain architecture, Protein kinase spans 43–329 (VPPLRPIGRG…VDEALCHPYL (287 aa)). ATP contacts are provided by residues 49-57 (IGRGAYGIV) and K72. The active-site Proton acceptor is D169. T201 is modified (phosphothreonine). Residues 201-203 (TEY) carry the TXY motif. Position 203 is a phosphotyrosine (Y203).

The protein belongs to the protein kinase superfamily. CMGC Ser/Thr protein kinase family. MAP kinase subfamily. Interacts with MEKK1, MKK1, MKK2 and MKK6. May form a ternary complex composed of MEKK1 and MKK1/MKK2 and MPK4. Interacts with MKS1 and AP2C1. May form a ternary or larger complex with MKS1 and WRKY25 and/or WRKY33. Interacts with MAP65-1. No interactions with RACK1A, RACK1B or RACK1C. Interacts directly with ASR3 and mediates its phosphorylation. Binds to MEKK2. Interacts with PAT1. Binds to HT1. Dually phosphorylated on Thr-201 and Tyr-203, which activates the enzyme. Autophosphorylated on serine and tyrosine residues. Dephosphorylated by DSPTP1. Phosphorylated by MKK6 in vitro. As to expression, ubiquitous. Expressed in the veins and stomatal guard cells of leaf plates, petioles, stem, roots and flowers.

The protein localises to the cytoplasm. Its subcellular location is the nucleus. It localises to the cytoskeleton. The catalysed reaction is L-seryl-[protein] + ATP = O-phospho-L-seryl-[protein] + ADP + H(+). It catalyses the reaction L-threonyl-[protein] + ATP = O-phospho-L-threonyl-[protein] + ADP + H(+). With respect to regulation, activated by threonine and tyrosine phosphorylation. Activated by the MAP kinase kinases MKK1 and MKK2. Activated in response to touch, wounding, low temperature, low humidity, salt stress and the bacterial elicitors flagellin and harpin. Activated upon Pseudomonas syringae pv. tomato DC3000 infection. Repressed by the protein phosphatase 2C AP2C1. Repressed by DSPTP1-mediated dephosphorylation. Activated by the MAP kinase kinase MKK6 in vitro. The ANPs-MKK6-MPK4 module is involved in the regulation of plant cytokinesis during meiosis and mitosis. Essential to promote the progression of cytokinesis and for cellularization (formation of the cell plate) during male-specific meiosis. Involved in cortical microtubules organization and stabilization by regulating the phosphorylation state of microtubule-associated proteins such as MAP65-1. Involved in root hair development process. Negative regulator of systemic acquired resistance (SAR) and salicylic acid- (SA) mediated defense response. Required for jasmonic acid- (JA) mediated defense gene expression. May regulate activity of transcription factor controlling pathogenesis-related (PR) gene expression. Seems to act independently of the SAR regulatory protein NPR1 (Nonexpresser of PR1). Phosphorylates MKS1 and transcription factors WRKY25 and WRKY33. The MEKK1, MKK1/MKK2 and MPK4 function in a signaling pathway that modulates the expression of genes responding to biotic and abiotic stresses and also plays an important role in pathogen defense by negatively regulating innate immunity. Phosphorylates MEKK2 upon treatment with flg22. Involved in stomatal movement regulation by repressing HT1 and HT1-mediated GHR1 phosphorylation. The sequence is that of Mitogen-activated protein kinase 4 from Arabidopsis thaliana (Mouse-ear cress).